The chain runs to 210 residues: Small heat shock protein hspG6 (210 aa).

The sHSP domain maps to 34–210; the sequence is KTIIDKLPPM…YSNTIKININ (177 aa). The disordered stretch occupies residues 93–151; it reads VIEKSTSSSTLDSKEDEPSIEEFEDDIKPKSKSDNTTVSTTTTATTKENKEDENKTKST. A compositionally biased stretch (low complexity) spans 126 to 138; that stretch reads DNTTVSTTTTATT. The segment covering 139-151 has biased composition (basic and acidic residues); the sequence is KENKEDENKTKST.

Belongs to the small heat shock protein (HSP20) family.

The sequence is that of Small heat shock protein hspG6 (hspG6) from Dictyostelium discoideum (Social amoeba).